The chain runs to 570 residues: L-ascorbate oxidase (570 aa).

The N-terminal stretch at 1 to 18 (MGMWWIVAVAILAHTASA) is a signal peptide. Plastocyanin-like domains are found at residues 33–140 (WPDC…IIDV) and 154–317 (FNLL…LNYV). Cystine bridges form between Cys36-Cys219, Cys98-Cys557, and Cys197-Cys211. Residues His77 and His79 each coordinate Cu cation. Asn109 carries N-linked (GlcNAc...) asparagine glycosylation. Cu cation-binding residues include His121 and His123. Asn196 is a glycosylation site (N-linked (GlcNAc...) asparagine). N-linked (GlcNAc...) asparagine glycans are attached at residues Asn229, Asn343, Asn384, Asn407, Asn434, Asn442, and Asn458. The 118-residue stretch at 426–543 (RNRNAKQGNV…MGMGVVFAEG (118 aa)) folds into the Plastocyanin-like 3 domain. Cu cation is bound by residues His463, His466, His468, His525, Cys526, His527, His531, and Met536.

The protein belongs to the multicopper oxidase family. Dimer. Requires Cu cation as cofactor.

It localises to the secreted. The enzyme catalyses 4 L-ascorbate + O2 = 4 monodehydro-L-ascorbate radical + 2 H2O. Its pathway is cofactor degradation; L-ascorbate degradation. Ascorbate oxidase involved in a redox system involving ascorbic acid (AsA). The oxidation of AsA represses responses to high salinity and oxidative stress conditions such as vegetative growth and seed production reductions. Negative regulator of defense responses toward incompatible Turnip mosaic virus (TuMV strain UK1) by preventing jasmonic acid (JA)- dependent accumulation of ascorbic acid (AsA, AS) and dehydroascobic acid (DHA). This chain is L-ascorbate oxidase, found in Brassica rapa subsp. pekinensis (Chinese cabbage).